We begin with the raw amino-acid sequence, 424 residues long: Gamma-glutamyl phosphate reductase (424 aa).

The protein belongs to the gamma-glutamyl phosphate reductase family.

Its subcellular location is the cytoplasm. The enzyme catalyses L-glutamate 5-semialdehyde + phosphate + NADP(+) = L-glutamyl 5-phosphate + NADPH + H(+). It functions in the pathway amino-acid biosynthesis; L-proline biosynthesis; L-glutamate 5-semialdehyde from L-glutamate: step 2/2. In terms of biological role, catalyzes the NADPH-dependent reduction of L-glutamate 5-phosphate into L-glutamate 5-semialdehyde and phosphate. The product spontaneously undergoes cyclization to form 1-pyrroline-5-carboxylate. The protein is Gamma-glutamyl phosphate reductase of Shewanella woodyi (strain ATCC 51908 / MS32).